Reading from the N-terminus, the 217-residue chain is Glycerol-3-phosphate acyltransferase (217 aa).

A run of 6 helical transmembrane segments spans residues 3 to 23 (IVIL…VWIG), 56 to 76 (VLLM…LFGL), 78 to 98 (GVNP…PIFA), 120 to 140 (FFIY…MVSL), 142 to 162 (SMIS…TVPA), and 163 to 183 (ILPT…TFIF).

Belongs to the PlsY family. As to quaternary structure, probably interacts with PlsX.

The protein localises to the cell membrane. The catalysed reaction is an acyl phosphate + sn-glycerol 3-phosphate = a 1-acyl-sn-glycero-3-phosphate + phosphate. It participates in lipid metabolism; phospholipid metabolism. In terms of biological role, catalyzes the transfer of an acyl group from acyl-phosphate (acyl-PO(4)) to glycerol-3-phosphate (G3P) to form lysophosphatidic acid (LPA). This enzyme utilizes acyl-phosphate as fatty acyl donor, but not acyl-CoA or acyl-ACP. The polypeptide is Glycerol-3-phosphate acyltransferase (Enterococcus faecalis (strain ATCC 700802 / V583)).